We begin with the raw amino-acid sequence, 214 residues long: Protein-L-isoaspartate O-methyltransferase (214 aa).

S61 is a catalytic residue.

The protein belongs to the methyltransferase superfamily. L-isoaspartyl/D-aspartyl protein methyltransferase family.

It is found in the cytoplasm. It carries out the reaction [protein]-L-isoaspartate + S-adenosyl-L-methionine = [protein]-L-isoaspartate alpha-methyl ester + S-adenosyl-L-homocysteine. Functionally, catalyzes the methyl esterification of L-isoaspartyl residues in peptides and proteins that result from spontaneous decomposition of normal L-aspartyl and L-asparaginyl residues. It plays a role in the repair and/or degradation of damaged proteins. The polypeptide is Protein-L-isoaspartate O-methyltransferase (Paramagnetospirillum magneticum (strain ATCC 700264 / AMB-1) (Magnetospirillum magneticum)).